Consider the following 763-residue polypeptide: MKRLQLFGRSKYFSLVSSAAKEEEEEEEGCADAKSLLHSTSHDIKSRSLRFNDKSSLMCLPTKVLLLILRTLDFNTLVTLCQVNSRFYNLITNEFLFQNVILDSKLSLLKFNALIHSEFHTSNIVTHSGDCSTQSRSQNARFLVRSIEFKNPQSQDSLLKYSKFYNKSGQDSIIAGSYKLDSYDKDVKKLNNIRLNDETPIITSERIKLLDKLESNYFHYTYIELMLDIIDYLPNLTRVILSDVEPNFKIPLWYSVFNDGSRDFFKKIIKGQQSITNEDLRTFQLSKKFVKEYESKYYSLPRLKILEIKANNKRQRTFNRQRHHQKLVLRPSLFCCFGIINELKLENVTIDTESLDTPMEFLPLFLKNEDNELYSLQSPITALTLDSCDVVPGNGILRLFHSYFKMVKHLSLLKINSKFDLLLCSCFPSLSNLTIDCNSKCFTNEQVVGESYYFQQRSLDTEDDFDDCNSMTETLFEAPSDSKIITPPPTSSVVLSLNLNYISRTTGNDVSNNPSPDNNKKPAMLTAAQLQNFQRQRIPEFHSFYHYYRLLWERLPSKNISINVINIPFTNVYPLSPLSFWEHLARTITSVDETDEDVGDENDQETLIGYENNSIRDNIPNANAVPNLSTVMSPESDIHHTYYWNNSVRRCLRDSLIKLKNRTIEYRDLDVEEFLQNVTLENFFNDFQDPENFKDIPNINLWCFLRNLSKFKAVKIRMLRHFSLCTPRTRYDWELLLKPVLRVNVPIEVRDKDGFVLYSYGQK.

One can recognise an F-box domain in the interval 54–100 (KSSLMCLPTKVLLLILRTLDFNTLVTLCQVNSRFYNLITNEFLFQNV). Phosphothreonine is present on threonine 594.

Interacts with SKP1. Component of the probable SCF(SKP2) complex containing CDC53, SKP1, RBX1 and SKP2. May interact with ribosomes.

The protein resides in the cytoplasm. Its pathway is protein modification; protein ubiquitination. Its function is as follows. Substrate recognition component of a SCF (SKP1-CUL1-F-box protein) E3 ubiquitin-protein ligase complex which mediates the ubiquitination and subsequent proteasomal degradation of target proteins. Probably recognizes and binds to phosphorylated target proteins. Regulates protein levels of sulfur metabolism enzymes. The SCF(SKP2) complex may regulate some transcription factors or regulators of cysteine and methionine biosynthesis. The protein is F-box protein SKP2 (SKP2) of Saccharomyces cerevisiae (strain ATCC 204508 / S288c) (Baker's yeast).